The following is a 465-amino-acid chain: Argininosuccinate lyase (465 aa).

This sequence belongs to the lyase 1 family. Argininosuccinate lyase subfamily.

Its subcellular location is the cytoplasm. It carries out the reaction 2-(N(omega)-L-arginino)succinate = fumarate + L-arginine. It functions in the pathway amino-acid biosynthesis; L-arginine biosynthesis; L-arginine from L-ornithine and carbamoyl phosphate: step 3/3. The protein is Argininosuccinate lyase of Bradyrhizobium diazoefficiens (strain JCM 10833 / BCRC 13528 / IAM 13628 / NBRC 14792 / USDA 110).